A 663-amino-acid polypeptide reads, in one-letter code: Alpha-amylase MalA (663 aa).

Disordered regions lie at residues 1–28 (MHHP…PTAT) and 80–135 (GTLE…LTLR). Over residues 92 to 111 (RSGGHSGGVSGGRSGPGRSG) the composition is skewed to gly residues. Aspartate 411 functions as the Nucleophile in the catalytic mechanism. Glutamate 440 serves as the catalytic Proton donor.

The protein belongs to the glycosyl hydrolase 13 family.

The protein resides in the cytoplasm. The enzyme catalyses Endohydrolysis of (1-&gt;4)-alpha-D-glucosidic linkages in polysaccharides containing three or more (1-&gt;4)-alpha-linked D-glucose units.. It functions in the pathway glycan degradation; starch degradation. With respect to regulation, stable and active over a broad range of NaCl concentrations (0.5 to 4.2 M NaCl), with maximal activity at 2.6 M NaCl. 83% and 94% of the maximum activity at 0.6 and 4.2 M NaCl, respectively. Active and stable also in KCl. Alpha-amylase that cleaves starch into oligosaccharides, the first step in starch degradation. Endo-acting enzyme which prefers a linear polysaccharide to branched polysaccharides hydrolyzing alpha-1,4 glucosidic bonds efficiently. Also has transglycosylation activity, but does not act on alpha-1,6 bonds. Higher activities of 100%, 79% and 67.8% against amylose, soluble starch and amylopectin, respectively. Lower activity of 22% against glycogen and faint or no activity against alpha-, beta- and gamma-cyclodextrin. The sequence is that of Alpha-amylase MalA from Haloarcula japonica (strain ATCC 49778 / DSM 6131 / JCM 7785 / NBRC 101032 / NCIMB 13157 / TR-1).